The primary structure comprises 249 residues: Expansin-A18 (249 aa).

Residues 1–21 (MGNIVLQLLAILALCIAPARS) form the signal peptide. An Expansin-like EG45 domain is found at 41-154 (GGACGYGNLY…QQVKCWRSGG (114 aa)). The N-linked (GlcNAc...) asparagine glycan is linked to asparagine 116. Residues 164-243 (YFELVLVTNM…GWSFGQTFST (80 aa)) enclose the Expansin-like CBD domain.

The protein belongs to the expansin family. Expansin A subfamily. Expressed in roots.

It is found in the secreted. Its subcellular location is the cell wall. The protein localises to the membrane. Functionally, may cause loosening and extension of plant cell walls by disrupting non-covalent bonding between cellulose microfibrils and matrix glucans. No enzymatic activity has been found. May be required for rapid internodal elongation in deepwater rice during submergence. The protein is Expansin-A18 (EXPA18) of Oryza sativa subsp. japonica (Rice).